An 864-amino-acid chain; its full sequence is DNA mismatch repair protein MutS (864 aa).

607-614 serves as a coordination point for ATP; that stretch reads GPNMGGKS.

The protein belongs to the DNA mismatch repair MutS family.

In terms of biological role, this protein is involved in the repair of mismatches in DNA. It is possible that it carries out the mismatch recognition step. This protein has a weak ATPase activity. The protein is DNA mismatch repair protein MutS of Neisseria gonorrhoeae (strain NCCP11945).